A 205-amino-acid chain; its full sequence is Heat shock protein beta-1 (205 aa).

Residue arginine 12 is modified to Omega-N-methylarginine. Position 15 is a phosphoserine; by MAPKAPK2 and MAPKAPK3 (serine 15). A phosphoserine mark is found at serine 26 and serine 65. Residues 70–205 (APAYSRALSR…AAKSDETAAK (136 aa)) are interaction with TGFB1I1. The sHSP domain occupies 76–184 (ALSRQLSSGV…QSNEITIPVT (109 aa)). Phosphoserine; by MAPKAPK2, MAPKAPK3 and MAPKAPK5 is present on residues serine 78 and serine 82. 3 positions are modified to phosphoserine: serine 83, serine 86, and serine 98. Lysine 123 is subject to N6-acetyllysine. Threonine 174 carries the post-translational modification Phosphothreonine. Phosphoserine is present on residues serine 176 and serine 199.

It belongs to the small heat shock protein (HSP20) family. Homooligomer. Homodimer; becomes monomeric upon activation. Heterooligomer; with HSPB6. Associates with alpha- and beta-tubulin. Interacts with TGFB1I1. Interacts with CRYAB. Interacts with HSPB8. Interacts with HSPBAP1. Phosphorylated upon exposure to protein kinase C activators and heat shock. Phosphorylation by MAPKAPK2 and MAPKAPK3 in response to stress dissociates HSPB1 from large small heat-shock protein (sHsps) oligomers and impairs its chaperone activity and ability to protect against oxidative stress effectively. Phosphorylation by MAPKAPK5 in response to PKA stimulation induces F-actin rearrangement. Detected in all tissues tested: skeletal muscle, heart, aorta, large intestine, small intestine, stomach, esophagus, bladder, adrenal gland, thyroid, pancreas, testis, adipose tissue, kidney, liver, spleen, cerebral cortex, blood serum and cerebrospinal fluid. Highest levels are found in the heart and in tissues composed of striated and smooth muscle.

The protein resides in the cytoplasm. The protein localises to the nucleus. It localises to the cytoskeleton. It is found in the spindle. Functionally, small heat shock protein which functions as a molecular chaperone probably maintaining denatured proteins in a folding-competent state. Plays a role in stress resistance and actin organization. Through its molecular chaperone activity may regulate numerous biological processes including the phosphorylation and the axonal transport of neurofilament proteins. The chain is Heat shock protein beta-1 (HSPB1) from Homo sapiens (Human).